The following is a 902-amino-acid chain: Glutamate receptor 4 (902 aa).

Residues 1–20 form the signal peptide; the sequence is MRIICRQIVLLFSGFWGLAM. Residues 22–544 are Extracellular-facing; that stretch reads AFPSSVQIGG…GVFSFLDPLA (523 aa). Asparagine 52, asparagine 56, asparagine 258, asparagine 371, asparagine 407, and asparagine 414 each carry an N-linked (GlcNAc...) asparagine glycan. A disulfide bridge links cysteine 84 with cysteine 331. L-glutamate contacts are provided by proline 500, threonine 502, and arginine 507. Residues 545–565 traverse the membrane as a helical segment; it reads YEIWMCIVFAYIGVSVVLFLV. The Cytoplasmic segment spans residues 566-592; that stretch reads SRFSPYEWHTEEPEDGKEGPSDQPPNE. Residues 593–608 constitute an intramembrane region (helical; Pore-forming); it reads FGIFNSLWFSLGAFMQ. An intramembrane segment occupies 609–611; that stretch reads QGC. A lipid anchor (S-palmitoyl cysteine) is attached at cysteine 611. Residues 612-617 lie on the Cytoplasmic side of the membrane; that stretch reads DISPRS. The chain crosses the membrane as a helical span at residues 618 to 638; sequence LSGRIVGGVWWFFTLIIISSY. Over 639–813 the chain is Extracellular; the sequence is TANLAAFLTV…DKTSALSLSN (175 aa). 3 residues coordinate L-glutamate: serine 676, threonine 677, and glutamate 727. Residues cysteine 740 and cysteine 795 are joined by a disulfide bond. A helical membrane pass occupies residues 814 to 834; that stretch reads VAGVFYILVGGLGLAMLVALI. Over 835-902 the chain is Cytoplasmic; that stretch reads EFCYKSRAEA…GLAVIASDLP (68 aa). Cysteine 837 carries S-palmitoyl cysteine lipidation. Serine 862 carries the phosphoserine; by PKC/PRKCG modification.

This sequence belongs to the glutamate-gated ion channel (TC 1.A.10.1) family. GRIA4 subfamily. Homotetramer or heterotetramer of pore-forming glutamate receptor subunits. Tetramers may be formed by the dimerization of dimers. Interacts with EPB41L1 via its C-terminus. Isoform 3 interacts with PICK1. Found in a complex with GRIA1, GRIA2, GRIA3, CNIH2, CNIH3, CACNG2, CACNG3, CACNG4, CACNG5, CACNG7 and CACNG8. Interacts with CACNG5 and PRKCG. Found in a complex with GRIA1, GRIA2, GRIA3, DLG4, CACNG8 and CNIH2. Post-translationally, palmitoylated. Depalmitoylated upon L-glutamate stimulation. ZDHHC3/GODZ specifically palmitoylates Cys-611, which leads to Golgi retention and decreased cell surface expression. In contrast, Cys-837 palmitoylation does not affect cell surface expression but regulates stimulation-dependent endocytosis. In terms of processing, phosphorylated at Ser-862 by PRKCG; phosphorylation increases plasma membrane-associated GRI4 expression. Detected in cerebellum.

The protein resides in the cell membrane. It localises to the postsynaptic cell membrane. It is found in the cell projection. Its subcellular location is the dendrite. The enzyme catalyses Ca(2+)(in) = Ca(2+)(out). It catalyses the reaction Na(+)(in) = Na(+)(out). It carries out the reaction Mg(2+)(in) = Mg(2+)(out). Functionally, ionotropic glutamate receptor that functions as a ligand-gated cation channel, gated by L-glutamate and glutamatergic agonists such as alpha-amino-3-hydroxy-5-methyl-4-isoxazolepropionic acid (AMPA), quisqualic acid, and kainic acid. L-glutamate acts as an excitatory neurotransmitter at many synapses in the central nervous system and plays an important role in fast excitatory synaptic transmission. Binding of the excitatory neurotransmitter L-glutamate induces a conformation change, leading to the opening of the cation channel, and thereby converts the chemical signal to an electrical impulse upon entry of monovalent and divalent cations such as sodium and calcium. The receptor then desensitizes rapidly and enters a transient inactive state, characterized by the presence of bound agonist. In the presence of CACNG8, shows resensitization which is characterized by a delayed accumulation of current flux upon continued application of L-glutamate. This Rattus norvegicus (Rat) protein is Glutamate receptor 4.